The following is a 393-amino-acid chain: Phosphoglycerate kinase (393 aa).

Substrate is bound by residues 21–23 (DFN), Arg-36, 59–62 (HLGR), Arg-118, and Arg-151. Residues Lys-201, Glu-323, and 349–352 (GGDS) each bind ATP.

The protein belongs to the phosphoglycerate kinase family. Monomer.

It localises to the cytoplasm. It catalyses the reaction (2R)-3-phosphoglycerate + ATP = (2R)-3-phospho-glyceroyl phosphate + ADP. Its pathway is carbohydrate degradation; glycolysis; pyruvate from D-glyceraldehyde 3-phosphate: step 2/5. This chain is Phosphoglycerate kinase, found in Moorella thermoacetica (strain ATCC 39073 / JCM 9320).